We begin with the raw amino-acid sequence, 370 residues long: Chloromuconate cycloisomerase (370 aa).

Lys165 functions as the Proton acceptor in the catalytic mechanism. Residues Asp194, Glu220, and Asp245 each contribute to the Mn(2+) site. The active-site Proton donor is Glu323.

It belongs to the mandelate racemase/muconate lactonizing enzyme family. Mn(2+) serves as cofactor.

The enzyme catalyses 2-[(2R)-2-chloro-2,5-dihydro-5-oxofuryl]acetate = 3-chloro-cis,cis-muconate + H(+). It functions in the pathway aromatic compound metabolism; 3-chlorocatechol degradation. Its function is as follows. Highly active toward chlorinated substrates but retains diminished activity toward the non-chlorinated substrates. This is Chloromuconate cycloisomerase (clcB) from Pseudomonas putida (Arthrobacter siderocapsulatus).